Here is a 290-residue protein sequence, read N- to C-terminus: GTPase Era (290 aa).

The region spanning 2-144 (KVLKVGVLGP…AIILEEFKPQ (143 aa)) is the Era-type G domain. A G1 region spans residues 10 to 17 (GPTNAGKS). A GTP-binding site is contributed by 10–17 (GPTNAGKS). The G2 stretch occupies residues 36–40 (NTTLL). The interval 58-61 (DVPG) is G3. 58–62 (DVPGF) serves as a coordination point for GTP. Positions 97–100 (NKIE) are G4. The tract at residues 121–123 (INK) is G5. Residue 122–125 (NKFH) participates in GTP binding. In terms of domain architecture, KH type-2 spans 201–279 (CKNEIPHIAR…FIDIFVKTEK (79 aa)).

The protein belongs to the TRAFAC class TrmE-Era-EngA-EngB-Septin-like GTPase superfamily. Era GTPase family. As to quaternary structure, monomer.

Its subcellular location is the cytoplasm. The protein localises to the cell membrane. Its function is as follows. An essential GTPase that binds both GDP and GTP, with rapid nucleotide exchange. Plays a role in 16S rRNA processing and 30S ribosomal subunit biogenesis and possibly also in cell cycle regulation and energy metabolism. This Mycoplasma genitalium (strain ATCC 33530 / DSM 19775 / NCTC 10195 / G37) (Mycoplasmoides genitalium) protein is GTPase Era.